Reading from the N-terminus, the 126-residue chain is Large ribosomal subunit protein bL12 (126 aa).

This sequence belongs to the bacterial ribosomal protein bL12 family. Homodimer. Part of the ribosomal stalk of the 50S ribosomal subunit. Forms a multimeric L10(L12)X complex, where L10 forms an elongated spine to which 2 to 4 L12 dimers bind in a sequential fashion. Binds GTP-bound translation factors.

Forms part of the ribosomal stalk which helps the ribosome interact with GTP-bound translation factors. Is thus essential for accurate translation. This Bordetella petrii (strain ATCC BAA-461 / DSM 12804 / CCUG 43448) protein is Large ribosomal subunit protein bL12.